Here is a 273-residue protein sequence, read N- to C-terminus: MEFGLREWLIVIGIIVIAGILFDGWRRMRGGKGRLKFKLDRSFANMPDDDSDPDLLSPPRVVKREMEPQLDEDDLPSMSAKELPRRSRNEPQQGDLNLAVDEPVPTLLNPVDDKPQEPKKSAKLSAEAAPVEEVLVINVVARDDLGFKGPALLQNILESGLRFGEMDIFHRHESMAGNGEVLFSMANALKPGTFDLDDIEGFSTRAVSFFLSLPGPRHPKQAFDVMVAAARKLAHELGGELKDDQRSVMTAQTIEHYRQRIVEFERRQLTQKR.

Position 1 (M1) is a topological domain, periplasmic. The helical transmembrane segment at 2–22 threads the bilayer; sequence EFGLREWLIVIGIIVIAGILF. At 23–273 the chain is on the cytoplasmic side; sequence DGWRRMRGGK…FERRQLTQKR (251 aa). Positions 65 to 125 are disordered; sequence EMEPQLDEDD…QEPKKSAKLS (61 aa). Residues 111–120 are compositionally biased toward basic and acidic residues; it reads VDDKPQEPKK.

Belongs to the ZipA family. In terms of assembly, interacts with FtsZ via their C-terminal domains.

The protein resides in the cell inner membrane. In terms of biological role, essential cell division protein that stabilizes the FtsZ protofilaments by cross-linking them and that serves as a cytoplasmic membrane anchor for the Z ring. Also required for the recruitment to the septal ring of downstream cell division proteins. This Ectopseudomonas mendocina (strain ymp) (Pseudomonas mendocina) protein is Cell division protein ZipA.